A 918-amino-acid polypeptide reads, in one-letter code: Valine--tRNA ligase (918 aa).

A 'HIGH' region motif is present at residues P50–H60. The short motif at K548–S552 is the 'KMSKS' region element. K551 provides a ligand contact to ATP. Residues N849–N883 adopt a coiled-coil conformation.

This sequence belongs to the class-I aminoacyl-tRNA synthetase family. ValS type 1 subfamily. Monomer.

The protein localises to the cytoplasm. The enzyme catalyses tRNA(Val) + L-valine + ATP = L-valyl-tRNA(Val) + AMP + diphosphate. Functionally, catalyzes the attachment of valine to tRNA(Val). As ValRS can inadvertently accommodate and process structurally similar amino acids such as threonine, to avoid such errors, it has a 'posttransfer' editing activity that hydrolyzes mischarged Thr-tRNA(Val) in a tRNA-dependent manner. This Prochlorococcus marinus subsp. pastoris (strain CCMP1986 / NIES-2087 / MED4) protein is Valine--tRNA ligase.